Here is a 484-residue protein sequence, read N- to C-terminus: Sulfoacetaldehyde dehydrogenase (484 aa).

Residues 105 to 110 (LTPVTN), G188, and G206 each bind NAD(+). The active-site Nucleophile is C239. E332 and L412 together coordinate NAD(+).

Belongs to the aldehyde dehydrogenase family.

It catalyses the reaction sulfoacetaldehyde + NAD(+) + CoA = sulfoacetyl-CoA + NADH + H(+). In terms of biological role, part of a variant of the sulfo-TK pathway, a D-sulfoquinovose degradation pathway that produces sulfoacetate. Catalyzes the oxidation of sulfoacetaldehyde (SA) to sulfoacetyl-coenzyme A (sulfoacetyl-CoA). Is highly specific for NAD(+), with only residual (1%) activity with NADP(+). Cannot use acetaldehyde. This Acholeplasma sp protein is Sulfoacetaldehyde dehydrogenase.